The sequence spans 498 residues: Lysine--tRNA ligase (498 aa).

Glu407 and Glu414 together coordinate Mg(2+).

The protein belongs to the class-II aminoacyl-tRNA synthetase family. In terms of assembly, homodimer. It depends on Mg(2+) as a cofactor.

Its subcellular location is the cytoplasm. It catalyses the reaction tRNA(Lys) + L-lysine + ATP = L-lysyl-tRNA(Lys) + AMP + diphosphate. In Sinorhizobium medicae (strain WSM419) (Ensifer medicae), this protein is Lysine--tRNA ligase.